Consider the following 293-residue polypeptide: Ribonuclease HIII (293 aa).

The RNase H type-2 domain occupies 78-293 (LPLIGTDEVG…TEKAKKRLER (216 aa)). Residues Asp-84, Glu-85, and Asp-187 each coordinate a divalent metal cation.

Belongs to the RNase HII family. RnhC subfamily. It depends on Mn(2+) as a cofactor. Mg(2+) serves as cofactor.

Its subcellular location is the cytoplasm. The catalysed reaction is Endonucleolytic cleavage to 5'-phosphomonoester.. Functionally, endonuclease that specifically degrades the RNA of RNA-DNA hybrids. The polypeptide is Ribonuclease HIII (Streptococcus pneumoniae serotype 19F (strain G54)).